We begin with the raw amino-acid sequence, 359 residues long: Guanine nucleotide-binding protein subunit alpha-11 (359 aa).

2 S-palmitoyl cysteine lipidation sites follow: cysteine 9 and cysteine 10. Residues 38–359 (RELKLLLLGT…QLNLKEYNLV (322 aa)) enclose the G-alpha domain. The G1 motif stretch occupies residues 41–54 (KLLLLGTGESGKST). GTP contacts are provided by residues 46–53 (GTGESGKS) and 180–183 (LRVR). Serine 53 contacts Mg(2+). The interval 178–186 (DVLRVRVPT) is G2 motif. Residue threonine 186 coordinates Mg(2+). Residues 201–210 (FRMVDVGGQR) are G3 motif. Deamidated glutamine; by Photorhabdus PAU_02230 is present on glutamine 209. Positions 270-277 (ILFLNKKD) are G4 motif. Residues 274 to 277 (NKKD) and alanine 331 each bind GTP. The G5 motif stretch occupies residues 329–334 (TCATDT).

This sequence belongs to the G-alpha family. G(q) subfamily. As to quaternary structure, g proteins are composed of 3 units; alpha, beta and gamma. The alpha chain contains the guanine nucleotide binding site. Interacts with RGS22. Interacts with NTSR1. (Microbial infection) Interacts with human cytomegalovirus (HHV-5) US28. Post-translationally, (Microbial infection) Deamidated at Gln-209 by Photorhabdus asymbiotica toxin PAU_02230, blocking GTP hydrolysis of heterotrimeric GNAQ or GNA11 and G-alphai (GNAI1, GNAI2 or GNAI3) proteins, thereby activating RhoA. Expressed in testis.

The protein resides in the cell membrane. Its subcellular location is the cytoplasm. The catalysed reaction is GTP + H2O = GDP + phosphate + H(+). Guanine nucleotide-binding proteins (G proteins) function as transducers downstream of G protein-coupled receptors (GPCRs) in numerous signaling cascades. The alpha chain contains the guanine nucleotide binding site and alternates between an active, GTP-bound state and an inactive, GDP-bound state. Signaling by an activated GPCR promotes GDP release and GTP binding. The alpha subunit has a low GTPase activity that converts bound GTP to GDP, thereby terminating the signal. Both GDP release and GTP hydrolysis are modulated by numerous regulatory proteins. Signaling is mediated via phospholipase C-beta-dependent inositol lipid hydrolysis for signal propagation: activates phospholipase C-beta: following GPCR activation, GNA11 activates PLC-beta (PLCB1, PLCB2, PLCB3 or PLCB4), leading to production of diacylglycerol (DAG) and inositol 1,4,5-trisphosphate (IP3). Transduces FFAR4 signaling in response to long-chain fatty acids (LCFAs). Together with GNAQ, required for heart development. In the respiratory epithelium, transmits OXGR1-dependent signals that lead to downstream intracellular Ca(2+) release and mucocilliary clearance of airborne pathogens. In Homo sapiens (Human), this protein is Guanine nucleotide-binding protein subunit alpha-11 (GNA11).